Reading from the N-terminus, the 229-residue chain is All-trans retinoic acid-induced differentiation factor (229 aa).

The N-terminal stretch at 1–30 (MAPHDPGSLTTLVPWAAALLLALGVERALA) is a signal peptide. Topologically, residues 31-199 (LPEICTQCPG…YKCMRQGSFS (169 aa)) are extracellular. 4 N-linked (GlcNAc...) asparagine glycosylation sites follow: Asn44, Asn79, Asn157, and Asn168. Residues 152–193 (QKNLCNNTGDPEMCPENGSCVPDGPGLLQCVCADGFHGYKCM) enclose the EGF-like domain. 3 cysteine pairs are disulfide-bonded: Cys156/Cys171, Cys165/Cys181, and Cys183/Cys192. The helical transmembrane segment at 200–220 (LLMFFGILGATTLSVSILLWA) threads the bilayer. Over 221 to 229 (TQRRKAKTS) the chain is Cytoplasmic.

In terms of assembly, interacts with NELL1; the interaction promotes osteoblastic differentiation and mineralization. Interacts with SLC37A3; the interaction is direct and both proteins are mutually dependent for their stability. Weakly expressed in hematopoietic cell lines.

Its subcellular location is the nucleus envelope. The protein localises to the cell membrane. The protein resides in the lysosome membrane. Promotes osteoblast cell differentiation and terminal mineralization. Plays a role in inducing the cell cycle arrest via inhibiting CCND1 expression in all-trans-retinoic acid (ATRA) signal pathway. In osteoclasts, forms a transporter complex with ATRAID for nitrogen-containing-bisphophonates (N-BPs) required for releasing N-BP molecules that have trafficked to lysosomes through fluid-phase endocytosis into the cytosol. The protein is All-trans retinoic acid-induced differentiation factor of Homo sapiens (Human).